Consider the following 113-residue polypeptide: U11-theraphotoxin-Hhn1a (113 aa).

A signal peptide spans 1–21 (MNTVRVTFLLVFVLAVSLGQA). Residues 22–74 (DKDENRMEMQEKTEQGRSYLDFAENLLLQKLEELEAKLLEEDSEESRNSRQKR) constitute a propeptide that is removed on maturation. Residues 61-83 (EEDSEESRNSRQKRCIGEGVPCD) form a disordered region. Intrachain disulfides connect cysteine 75–cysteine 90, cysteine 82–cysteine 95, and cysteine 89–cysteine 110.

Belongs to the neurotoxin 14 (magi-1) family. 01 (HNTX-16) subfamily. In terms of tissue distribution, expressed by the venom gland.

It localises to the secreted. Functionally, probable ion channel inhibitor. This is U11-theraphotoxin-Hhn1a from Cyriopagopus hainanus (Chinese bird spider).